A 256-amino-acid polypeptide reads, in one-letter code: Thiazole synthase (256 aa).

The active-site Schiff-base intermediate with DXP is lysine 96. Residues glycine 157, 183–184 (AG), and 205–206 (NT) contribute to the 1-deoxy-D-xylulose 5-phosphate site.

The protein belongs to the ThiG family. As to quaternary structure, homotetramer. Forms heterodimers with either ThiH or ThiS.

The protein localises to the cytoplasm. It catalyses the reaction [ThiS sulfur-carrier protein]-C-terminal-Gly-aminoethanethioate + 2-iminoacetate + 1-deoxy-D-xylulose 5-phosphate = [ThiS sulfur-carrier protein]-C-terminal Gly-Gly + 2-[(2R,5Z)-2-carboxy-4-methylthiazol-5(2H)-ylidene]ethyl phosphate + 2 H2O + H(+). It functions in the pathway cofactor biosynthesis; thiamine diphosphate biosynthesis. Its function is as follows. Catalyzes the rearrangement of 1-deoxy-D-xylulose 5-phosphate (DXP) to produce the thiazole phosphate moiety of thiamine. Sulfur is provided by the thiocarboxylate moiety of the carrier protein ThiS. In vitro, sulfur can be provided by H(2)S. The polypeptide is Thiazole synthase (Clostridioides difficile (strain 630) (Peptoclostridium difficile)).